The following is a 445-amino-acid chain: MTAASSLHPPAIPRVGFVSLGCPKATVDSERILTCLRAEGYLISPNYADADLVVVNTCGFIDSAVAESLETIGEALTENGKVIVTGCLGAKEDVIRQAHPSVLAVTGPQATEEVMAAIHHHLPKPHDPYLDLVPPQGIKLTPKHYAYLKISEGCNHHCTFCIIPSMRGDLVSRPVGGVLQEAQSLVEAGVKELLIISQDTSAYGVDIKYRTGFWQGRPVRTRITELANALGEFGIWVRLHYVYPYPHVDELIPLMAEGKLLPYLDIPFQHANKRILKLMKRPANSENVLVRIQQWRKTCPDIALRSTFIVGFPGETEAEFEELLAFLEEAQLDRVGAFTYSPVKGAAANVLPDHVPPEIQQERLERLMQQQEIISKQRLAVKKGQQLRVLVDTVDEEGAIARSYADAPEIDGVVYINDASTLKPGDWADVRVTDTDIHDLWTEKI.

The 111-residue stretch at 13-123 (PRVGFVSLGC…VMAAIHHHLP (111 aa)) folds into the MTTase N-terminal domain. 6 residues coordinate [4Fe-4S] cluster: C22, C58, C87, C154, C158, and C161. The region spanning 140-377 (LTPKHYAYLK…MQQQEIISKQ (238 aa)) is the Radical SAM core domain. In terms of domain architecture, TRAM spans 380 to 445 (AVKKGQQLRV…DIHDLWTEKI (66 aa)).

The protein belongs to the methylthiotransferase family. RimO subfamily. The cofactor is [4Fe-4S] cluster.

It is found in the cytoplasm. It catalyses the reaction L-aspartate(89)-[ribosomal protein uS12]-hydrogen + (sulfur carrier)-SH + AH2 + 2 S-adenosyl-L-methionine = 3-methylsulfanyl-L-aspartate(89)-[ribosomal protein uS12]-hydrogen + (sulfur carrier)-H + 5'-deoxyadenosine + L-methionine + A + S-adenosyl-L-homocysteine + 2 H(+). Its function is as follows. Catalyzes the methylthiolation of an aspartic acid residue of ribosomal protein uS12. The chain is Ribosomal protein uS12 methylthiotransferase RimO from Nitrosomonas eutropha (strain DSM 101675 / C91 / Nm57).